Consider the following 316-residue polypeptide: Ribonuclease Z (316 aa).

Zn(2+) contacts are provided by His63, His65, Asp67, His68, His143, Asp213, and His271. Asp67 serves as the catalytic Proton acceptor.

The protein belongs to the RNase Z family. As to quaternary structure, homodimer. It depends on Zn(2+) as a cofactor.

The catalysed reaction is Endonucleolytic cleavage of RNA, removing extra 3' nucleotides from tRNA precursor, generating 3' termini of tRNAs. A 3'-hydroxy group is left at the tRNA terminus and a 5'-phosphoryl group is left at the trailer molecule.. In terms of biological role, zinc phosphodiesterase, which displays some tRNA 3'-processing endonuclease activity. Probably involved in tRNA maturation, by removing a 3'-trailer from precursor tRNA. This chain is Ribonuclease Z, found in Bacteroides thetaiotaomicron (strain ATCC 29148 / DSM 2079 / JCM 5827 / CCUG 10774 / NCTC 10582 / VPI-5482 / E50).